The following is a 195-amino-acid chain: Rubrerythrin-1 (195 aa).

The 148-residue stretch at 3–150 (SLKGTKTAEN…ALLKNIEENK (148 aa)) folds into the Ferritin-like diiron domain. Fe(3+) is bound by residues Glu-20, Glu-53, Glu-98, Glu-101, Glu-132, His-135, Cys-162, Cys-165, Cys-178, and Cys-181. Positions 157-191 (VKFWKCIKCGYIFEGKTAPKVCPACLHPQAYFEIL) constitute a Rubredoxin-like domain.

As to quaternary structure, homodimer. It depends on Fe(3+) as a cofactor.

The catalysed reaction is H2O2 + NADH + H(+) = NAD(+) + 2 H2O. Its activity is regulated as follows. Rubredoxin (Rd) increases the NADH consumption rate by serving as an intermediary electron-transfer shuttle between NROR and RubY. In terms of biological role, functions as the terminal component of an NADH peroxidase (NADH:H(2)O(2) oxidoreductase) when using NADH:rubredoxin oxidoreductase (NROR) as the electron transport intermediary from NADH to RubY. This chain is Rubrerythrin-1 (rbr1), found in Clostridium acetobutylicum (strain ATCC 824 / DSM 792 / JCM 1419 / IAM 19013 / LMG 5710 / NBRC 13948 / NRRL B-527 / VKM B-1787 / 2291 / W).